The chain runs to 621 residues: MKNKKPRKFITQAPTLSLLALALLAGSVQAEDIGERTDQGTAMLASLQSEQGLIYLNADVWLKRQGATPLMTRDQLRERVLARGERLFIDFSAVTDQSERQQTRKAMEQLAGISFDADWVLVSGYKGELLFTPLGGVDDPAFYQVMERVESLEGQGKRHKRSLTQPPAAEAGLPHVAFYLNVNRKISDAECTFPRSRTWSRGDRLFCDSPNISLVYRVNLERSLQFGNTGSATPDAKIVRISLDEESAGAGIQLNEDLTWSENIADYLLLDGWARDYATDAIAQDYRFSIEASNTKAAVLKSLPTNLNSKYEHREISGFEVGVTGGVEVNKDGPKAKLEASAKFSQQRQLAYNTQDYRVERSAPSAQKVSFSWVRDQYATAESLLSSKTATVWGMGYDVDHNRIQPLSYKGFVPNLDVIYKAAPDETGSTEFKIDSSVNIRPIYTGIYKHYYVVGAHVSFQGFEDTDKRRRVTASTSFKVDWNHPVFTGGRPVNLQLGGFDNRCLSADANHGLSAVTCDETSAAQSFIYDQYGRYVSAQDTRRCLDGNNLGQLQSCSLSLGQRWEWKADSDALSNLSAHQLLGHDKQSGALGLYDENGNPQNVSVRTLTSYTRIFGPPASH.

A signal peptide spans 1–30 (MKNKKPRKFITQAPTLSLLALALLAGSVQA). A Ricin B-type lectin domain is found at 491–610 (RPVNLQLGGF…QNVSVRTLTS (120 aa)).

This sequence belongs to the HlyA hemolysin family.

Bacterial hemolysins are exotoxins that attack blood cell membranes and cause cell rupture by mechanisms not clearly defined. The chain is Hemolysin ahh1 (ahh1) from Aeromonas hydrophila subsp. hydrophila (strain ATCC 7966 / DSM 30187 / BCRC 13018 / CCUG 14551 / JCM 1027 / KCTC 2358 / NCIMB 9240 / NCTC 8049).